The chain runs to 753 residues: Rho guanine nucleotide exchange factor gef1 (753 aa).

Disordered regions lie at residues 52–150 (SNSY…DRNR), 175–194 (TLRK…RVSG), and 200–245 (AQNS…ASLL). Composition is skewed to polar residues over residues 94 to 105 (DPQTPNTPPVSS), 114 to 141 (GSFN…TLTP), 181 to 191 (TNTSSNGTSRR), and 200 to 220 (AQNS…GSST). The segment covering 230–245 (TLASMPSSHSSTASLL) has biased composition (low complexity). The 197-residue stretch at 311–507 (KRANLIKELV…QELISGINQK (197 aa)) folds into the DH domain.

Interacts with cdc42.

It is found in the cytoplasm. Has a role in the control of cell polarity and cytokinesis. Involved in bipolar growth, via modulation of cdc42-shk1-orb6 signaling, and septum formation. Stimulates guanine nucleotide exchange of cdc42. The polypeptide is Rho guanine nucleotide exchange factor gef1 (gef1) (Schizosaccharomyces pombe (strain 972 / ATCC 24843) (Fission yeast)).